Consider the following 73-residue polypeptide: Large ribosomal subunit protein uL30 (73 aa).

This sequence belongs to the universal ribosomal protein uL30 family. Part of the 50S ribosomal subunit.

The polypeptide is Large ribosomal subunit protein uL30 (Borreliella afzelii (strain PKo) (Borrelia afzelii)).